Reading from the N-terminus, the 30-residue chain is Truncated interleukin-1-binding protein (30 aa).

A signal peptide spans 1-18 (MSILPVIFLPIFFYSSFV).

It belongs to the interleukin-1 receptor family.

In Vaccinia virus (strain Copenhagen) (VACV), this protein is Truncated interleukin-1-binding protein.